A 338-amino-acid polypeptide reads, in one-letter code: Taste receptor type 2 member 39 (338 aa).

The Extracellular segment spans residues 1–30 (MLGRCFPPDTKEKQQLRMTKLCDPAESELS). The helical transmembrane segment at 31-51 (PFLITLILAVLLAEYLIGIIA) threads the bilayer. Residues 52–74 (NGFIMAIHAAEWVQNKAVSTSGR) lie on the Cytoplasmic side of the membrane. The helical transmembrane segment at 75–95 (ILVFLSVSRIALQSLMMLEIT) threads the bilayer. The Extracellular portion of the chain corresponds to 96–116 (ISSTSLSFYSEDAVYYAFKIS). A helical membrane pass occupies residues 117–137 (FIFLNFCSLWFAAWLSFFYFV). The Cytoplasmic segment spans residues 138–156 (KIANFSYPLFLKLRWRITG). The helical transmembrane segment at 157–177 (LIPWLLWLSVFISFSHSMFCI) threads the bilayer. Over 178 to 205 (NICTVYCNNSFPIHSSNSTKKTYLSEIN) the chain is Extracellular. 2 N-linked (GlcNAc...) asparagine glycosylation sites follow: N185 and N194. Residues 206–226 (VVGLAFFFNLGIVTPLIMFIL) form a helical membrane-spanning segment. The Cytoplasmic segment spans residues 227 to 262 (TATLLILSLKRHTLHMGSNATGSNDPSMEAHMGAIK). A helical membrane pass occupies residues 263-283 (AISYFLILYIFNAVALFIYLS). At 284–291 (NMFDINSL) the chain is on the extracellular side. Residues 292–312 (WNNLCQIIMAAYPAGHSILPI) form a helical membrane-spanning segment. The Cytoplasmic segment spans residues 313 to 338 (QDNPGLRRAWKRLQLRLHLYPKEWTL).

This sequence belongs to the G-protein coupled receptor T2R family.

The protein resides in the membrane. Functionally, receptor that may play a role in the perception of bitterness and is gustducin-linked. May play a role in sensing the chemical composition of the gastrointestinal content. The activity of this receptor may stimulate alpha gustducin, mediate PLC-beta-2 activation and lead to the gating of TRPM5. This chain is Taste receptor type 2 member 39 (TAS2R39), found in Pan paniscus (Pygmy chimpanzee).